Reading from the N-terminus, the 391-residue chain is MSVIKMADLDLAGKRLFIRADLNVPVKDGKVTSDARIRATIPTLKLALQKGAKVMVTSHLGRPTEGVFEEANSLQPVVDYLNASDLGVPVRLVRDYLDGVEVAENEIVVLENVRINKGEKKNDPELAKKYAALCDVFVMDAFGTAHRAEGSTYGVAEYAPVACAGPLLAAELDALGKALKEPQRPMLAIVGGSKVSTKLTVLDSLSKIADQLIVGGGIANTFIAAEGHPVGKSLYEADLIPEAKRLAAATNIPVPVDVRVGTEFSEIAPATEKAVSEVQADESIFDIGDKSAEELANIIKSAKTILWNGPVGVFEFPNFRKGTEVISNAIAEATANGAFSIAGGGDTLAAIDLFGIADKISYISTGGGAFLEFVEGKVLPAVEILEKRANG.

Substrate-binding positions include 21–23 (DLN), Arg-36, 59–62 (HLGR), Arg-114, and Arg-147. Residues Lys-198, Glu-315, and 344–347 (GGDT) contribute to the ATP site.

It belongs to the phosphoglycerate kinase family. In terms of assembly, monomer.

Its subcellular location is the cytoplasm. The enzyme catalyses (2R)-3-phosphoglycerate + ATP = (2R)-3-phospho-glyceroyl phosphate + ADP. It functions in the pathway carbohydrate degradation; glycolysis; pyruvate from D-glyceraldehyde 3-phosphate: step 2/5. The polypeptide is Phosphoglycerate kinase (Actinobacillus pleuropneumoniae serotype 5b (strain L20)).